The sequence spans 824 residues: Leucine--tRNA ligase (824 aa).

A 'HIGH' region motif is present at residues Pro-42 to His-52. Positions Lys-581 to Ser-585 match the 'KMSKS' region motif. Residue Lys-584 participates in ATP binding.

The protein belongs to the class-I aminoacyl-tRNA synthetase family.

Its subcellular location is the cytoplasm. It carries out the reaction tRNA(Leu) + L-leucine + ATP = L-leucyl-tRNA(Leu) + AMP + diphosphate. In Citrifermentans bemidjiense (strain ATCC BAA-1014 / DSM 16622 / JCM 12645 / Bem) (Geobacter bemidjiensis), this protein is Leucine--tRNA ligase.